A 336-amino-acid polypeptide reads, in one-letter code: MLSYAPENAYQRASTMENKKVFPKEKSGLHPRNRHRSRYDFDALSVSCPELIPFLAPTAYGDISVDFADPLAVKMLNKALLKHFYGIEYWDIPADSLCPPIPGRADYVHHLADLLASCNGEVIPKGKNIALLDIGVGANCIYPIIGQREYGWRFTGTDIDSHALSAAKMVVSMNPTLKNTLRLKQQKDPHAIFEGVWAVNERYDATLCNPPFHGSAEEAAATTRRKLHKLGKNEVAAKPVQNFGGKNSELWCEGGEEGFVSRMVAESVAKAQNCFWFTSLISKKTTLPAIYHALRYVKAVEVRTIEMAQGQKVSRFVAWTFLTLEQQAAWVAERWA.

It belongs to the methyltransferase superfamily. METTL16/RlmF family.

It is found in the cytoplasm. It catalyses the reaction adenosine(1618) in 23S rRNA + S-adenosyl-L-methionine = N(6)-methyladenosine(1618) in 23S rRNA + S-adenosyl-L-homocysteine + H(+). Its function is as follows. Specifically methylates the adenine in position 1618 of 23S rRNA. The polypeptide is Ribosomal RNA large subunit methyltransferase F (Yersinia pestis (strain Pestoides F)).